The chain runs to 493 residues: Probable cytosol aminopeptidase (493 aa).

Positions 260 and 265 each coordinate Mn(2+). K272 is a catalytic residue. Residues D284, D343, and E345 each coordinate Mn(2+). R347 is a catalytic residue.

It belongs to the peptidase M17 family. Mn(2+) serves as cofactor.

The protein resides in the cytoplasm. It catalyses the reaction Release of an N-terminal amino acid, Xaa-|-Yaa-, in which Xaa is preferably Leu, but may be other amino acids including Pro although not Arg or Lys, and Yaa may be Pro. Amino acid amides and methyl esters are also readily hydrolyzed, but rates on arylamides are exceedingly low.. The catalysed reaction is Release of an N-terminal amino acid, preferentially leucine, but not glutamic or aspartic acids.. Its function is as follows. Presumably involved in the processing and regular turnover of intracellular proteins. Catalyzes the removal of unsubstituted N-terminal amino acids from various peptides. This chain is Probable cytosol aminopeptidase, found in Nostoc punctiforme (strain ATCC 29133 / PCC 73102).